A 60-amino-acid polypeptide reads, in one-letter code: Large ribosomal subunit protein eL37 (60 aa).

Residues C19, C22, C34, and C37 each contribute to the Zn(2+) site. The C4-type zinc finger occupies 19 to 37; it reads CRRCGRISFHAQKKVCSSC.

Belongs to the eukaryotic ribosomal protein eL37 family. The cofactor is Zn(2+).

Functionally, binds to the 23S rRNA. In Methanoregula boonei (strain DSM 21154 / JCM 14090 / 6A8), this protein is Large ribosomal subunit protein eL37.